Reading from the N-terminus, the 469-residue chain is Glutamate--tRNA ligase (469 aa).

The 'HIGH' region motif lies at 9–19 (PSPTGFLHVGG). Cys-98, Cys-100, Cys-125, and Asp-127 together coordinate Zn(2+). The 'KMSKS' region motif lies at 236 to 240 (KLSKR). An ATP-binding site is contributed by Lys-239.

Belongs to the class-I aminoacyl-tRNA synthetase family. Glutamate--tRNA ligase type 1 subfamily. In terms of assembly, monomer. Zn(2+) serves as cofactor.

Its subcellular location is the cytoplasm. The catalysed reaction is tRNA(Glu) + L-glutamate + ATP = L-glutamyl-tRNA(Glu) + AMP + diphosphate. In terms of biological role, catalyzes the attachment of glutamate to tRNA(Glu) in a two-step reaction: glutamate is first activated by ATP to form Glu-AMP and then transferred to the acceptor end of tRNA(Glu). The sequence is that of Glutamate--tRNA ligase from Shewanella putrefaciens (strain CN-32 / ATCC BAA-453).